The primary structure comprises 210 residues: Cytochrome c biogenesis ATP-binding export protein CcmA (210 aa).

The 207-residue stretch at 3-209 folds into the ABC transporter domain; the sequence is LTVTNLACAR…PADDPFAGVT (207 aa). 35 to 42 is an ATP binding site; that stretch reads GPNGIGKT.

This sequence belongs to the ABC transporter superfamily. CcmA exporter (TC 3.A.1.107) family. As to quaternary structure, the complex is composed of two ATP-binding proteins (CcmA) and two transmembrane proteins (CcmB).

It is found in the cell inner membrane. The enzyme catalyses heme b(in) + ATP + H2O = heme b(out) + ADP + phosphate + H(+). In terms of biological role, part of the ABC transporter complex CcmAB involved in the biogenesis of c-type cytochromes; once thought to export heme, this seems not to be the case, but its exact role is uncertain. Responsible for energy coupling to the transport system. This Cereibacter sphaeroides (strain ATCC 17023 / DSM 158 / JCM 6121 / CCUG 31486 / LMG 2827 / NBRC 12203 / NCIMB 8253 / ATH 2.4.1.) (Rhodobacter sphaeroides) protein is Cytochrome c biogenesis ATP-binding export protein CcmA.